Here is a 758-residue protein sequence, read N- to C-terminus: Spastin (758 aa).

The segment at 1–103 (MVRTKNQSSS…SPRSGHHHSY (103 aa)) is disordered. Over 1-121 (MVRTKNQSSS…KQNLYVVSFP (121 aa)) the chain is Cytoplasmic. Positions 1–159 (MVRTKNQSSS…VIYRPHRRDC (159 aa)) are interaction with atl. The interval 1–210 (MVRTKNQSSS…RPIQPLEMAA (210 aa)) is required for localization to punctate cytoplasmic foci. Composition is skewed to low complexity over residues 8-28 (SSSS…SSGA), 43-58 (RSSS…AGGS), 66-76 (SSNRRSPGSSP), and 85-95 (TDDLTPTTCSP). Residues 122–142 (IIFLFNVLRSLIYQLFCIFRY) constitute an intramembrane region (helical). At 143 to 758 (LYGASTKVIY…WSQDYGDITI (616 aa)) the chain is on the cytoplasmic side. Composition is skewed to polar residues over residues 169–180 (SKEQQQSLNHPS) and 189–198 (QEQQLSNQPQ). The interval 169-202 (SKEQQQSLNHPSELNREGDGQEQQLSNQPQRFRP) is disordered. The interval 208–758 (MAANRPGGGY…WSQDYGDITI (551 aa)) is sufficient for interaction with microtubules and microtubule severing. The MIT domain maps to 233–308 (HRRAFEYISK…SMARDRLHFL (76 aa)). The interval 353–454 (RVRSSGYGPK…GPSGSGASTP (102 aa)) is disordered. 2 stretches are compositionally biased toward polar residues: residues 390–406 (NKSQ…TSVG) and 425–454 (QFSS…ASTP). Thr-439 carries the phosphothreonine modification. The tract at residues 443–455 (NNGPSGSGASTPV) is required for interaction with microtubules. 523-530 (GPPGNGKT) provides a ligand contact to ATP.

Belongs to the AAA ATPase family. Spastin subfamily. In terms of assembly, homohexamer. The homohexamer is stabilized by ATP-binding. The homohexamer may adopt a ring conformation through which microtubules pass prior to being severed. Interacts with microtubules. Interacts with atl; may be involved in microtubule dynamics.

The protein resides in the membrane. The protein localises to the cytoplasm. It is found in the cytoskeleton. Its subcellular location is the microtubule organizing center. It localises to the centrosome. The protein resides in the chromosome. The protein localises to the lipid droplet. The enzyme catalyses n ATP + n H2O + a microtubule = n ADP + n phosphate + (n+1) alpha/beta tubulin heterodimers.. ATP-dependent microtubule severing protein. Stimulates microtubule minus-end depolymerization and poleward microtubule flux in the mitotic spindle. Regulates microtubule stability in the neuromuscular junction synapse. Involved in lipid metabolism by regulating the size and distribution of lipid droplets. Involved in axon regeneration by regulating microtubule severing. The sequence is that of Spastin from Drosophila melanogaster (Fruit fly).